The primary structure comprises 228 residues: Flagellar L-ring protein (228 aa).

Residues 1–17 form the signal peptide; it reads MHYLRYFAIAFLLLLSS. The N-palmitoyl cysteine moiety is linked to residue cysteine 18. A lipid anchor (S-diacylglycerol cysteine) is attached at cysteine 18.

It belongs to the FlgH family. In terms of assembly, the basal body constitutes a major portion of the flagellar organelle and consists of four rings (L,P,S, and M) mounted on a central rod.

It localises to the cell membrane. It is found in the bacterial flagellum basal body. Its function is as follows. Assembles around the rod to form the L-ring and probably protects the motor/basal body from shearing forces during rotation. This chain is Flagellar L-ring protein, found in Wigglesworthia glossinidia brevipalpis.